Reading from the N-terminus, the 199-residue chain is Pyridoxine/pyridoxamine 5'-phosphate oxidase (199 aa).

FMN-binding positions include 45–50 (RVVLLK), 60–61 (FT), Arg-66, Lys-67, and Gln-89. Lys-50 is a substrate binding site. Substrate contacts are provided by Tyr-107, Arg-111, and Ser-115. Residues 124 to 125 (QS) and Trp-169 each bind FMN. Residue 175–177 (RIH) coordinates substrate. Arg-179 serves as a coordination point for FMN.

The protein belongs to the pyridoxamine 5'-phosphate oxidase family. Homodimer. The cofactor is FMN.

It carries out the reaction pyridoxamine 5'-phosphate + O2 + H2O = pyridoxal 5'-phosphate + H2O2 + NH4(+). The catalysed reaction is pyridoxine 5'-phosphate + O2 = pyridoxal 5'-phosphate + H2O2. Its pathway is cofactor metabolism; pyridoxal 5'-phosphate salvage; pyridoxal 5'-phosphate from pyridoxamine 5'-phosphate: step 1/1. It participates in cofactor metabolism; pyridoxal 5'-phosphate salvage; pyridoxal 5'-phosphate from pyridoxine 5'-phosphate: step 1/1. Its function is as follows. Catalyzes the oxidation of either pyridoxine 5'-phosphate (PNP) or pyridoxamine 5'-phosphate (PMP) into pyridoxal 5'-phosphate (PLP). In Ehrlichia chaffeensis (strain ATCC CRL-10679 / Arkansas), this protein is Pyridoxine/pyridoxamine 5'-phosphate oxidase.